The sequence spans 887 residues: Bifunctional uridylyltransferase/uridylyl-removing enzyme (887 aa).

The tract at residues 1 to 329 (MKGLNAKPFS…FPDEEAVTTI (329 aa)) is uridylyltransferase. The interval 330-686 (INERFQKRGD…TRAAETGAGV (357 aa)) is uridylyl-removing. The HD domain occupies 448 to 570 (VDEHILMVVR…MRDERHLIAL (123 aa)). ACT domains follow at residues 687–772 (EVLV…GRLS) and 796–871 (VLSI…PETP). Residues 864–887 (TSPQPETPGKAPGKPSAGDRIIPR) are disordered.

The protein belongs to the GlnD family. Mg(2+) is required as a cofactor.

It catalyses the reaction [protein-PII]-L-tyrosine + UTP = [protein-PII]-uridylyl-L-tyrosine + diphosphate. The catalysed reaction is [protein-PII]-uridylyl-L-tyrosine + H2O = [protein-PII]-L-tyrosine + UMP + H(+). Its activity is regulated as follows. Uridylyltransferase (UTase) activity is inhibited by glutamine, while glutamine activates uridylyl-removing (UR) activity. Modifies, by uridylylation and deuridylylation, the PII regulatory proteins (GlnB and homologs), in response to the nitrogen status of the cell that GlnD senses through the glutamine level. Under low glutamine levels, catalyzes the conversion of the PII proteins and UTP to PII-UMP and PPi, while under higher glutamine levels, GlnD hydrolyzes PII-UMP to PII and UMP (deuridylylation). Thus, controls uridylylation state and activity of the PII proteins, and plays an important role in the regulation of nitrogen assimilation and metabolism. The protein is Bifunctional uridylyltransferase/uridylyl-removing enzyme of Nitrosospira multiformis (strain ATCC 25196 / NCIMB 11849 / C 71).